We begin with the raw amino-acid sequence, 387 residues long: ATP phosphoribosyltransferase regulatory subunit (387 aa).

Belongs to the class-II aminoacyl-tRNA synthetase family. HisZ subfamily. Heteromultimer composed of HisG and HisZ subunits.

It localises to the cytoplasm. It participates in amino-acid biosynthesis; L-histidine biosynthesis; L-histidine from 5-phospho-alpha-D-ribose 1-diphosphate: step 1/9. Functionally, required for the first step of histidine biosynthesis. May allow the feedback regulation of ATP phosphoribosyltransferase activity by histidine. The chain is ATP phosphoribosyltransferase regulatory subunit from Polynucleobacter necessarius subsp. necessarius (strain STIR1).